We begin with the raw amino-acid sequence, 386 residues long: Innexin inx4 (386 aa).

Residues 1 to 21 lie on the Cytoplasmic side of the membrane; the sequence is MLEFVRPLQSILQIKQVNSTD. A helical transmembrane segment spans residues 22 to 42; that stretch reads LVWRLHCRVTVFLLLLASLLL. Residues 43 to 111 lie on the Extracellular side of the membrane; it reads SARQYFGNPI…ESERSYQKYY (69 aa). A helical membrane pass occupies residues 112–132; the sequence is QWVVFILALQACMFSVPNFLW. The Cytoplasmic portion of the chain corresponds to 133–187; that stretch reads KAWEAGRLQSLCDGLTTPIVPDHWEKTRKKQLITYLSADFPRLHRTYLLRYCFCT. Residues 188–208 traverse the membrane as a helical segment; that stretch reads LLNFCNVLLNIFLVNVIFSGF. Residues 209–272 lie on the Extracellular side of the membrane; the sequence is WSNYHPAVKA…LNVVNEKIFA (64 aa). A helical membrane pass occupies residues 273-293; sequence FIWLWFLGLLVISMLNLLFWI. At 294–386 the chain is on the cytoplasmic side; it reads VVLCSKGFRL…DPEGYDEEGV (93 aa). The disordered stretch occupies residues 358-386; the sequence is HNGHKTFRMPKGGEPDFYTDPEGYDEEGV. Positions 374-386 are enriched in acidic residues; the sequence is FYTDPEGYDEEGV.

This sequence belongs to the pannexin family.

The protein localises to the cell membrane. The protein resides in the cell junction. It localises to the gap junction. Structural component of gap junctions. Required for normal development of ovary. Required for normal egg production after blood meal. Required for normal development of testis. Its function is as follows. (Microbial infection) Modulates the development of Plasmodium falciparum oocysts. The chain is Innexin inx4 from Anopheles gambiae (African malaria mosquito).